The chain runs to 124 residues: Small ribosomal subunit protein uS12 (124 aa).

The residue at position 89 (D89) is a 3-methylthioaspartic acid.

This sequence belongs to the universal ribosomal protein uS12 family. As to quaternary structure, part of the 30S ribosomal subunit. Contacts proteins S8 and S17. May interact with IF1 in the 30S initiation complex.

With S4 and S5 plays an important role in translational accuracy. Its function is as follows. Interacts with and stabilizes bases of the 16S rRNA that are involved in tRNA selection in the A site and with the mRNA backbone. Located at the interface of the 30S and 50S subunits, it traverses the body of the 30S subunit contacting proteins on the other side and probably holding the rRNA structure together. The combined cluster of proteins S8, S12 and S17 appears to hold together the shoulder and platform of the 30S subunit. In Acinetobacter baumannii (strain AB307-0294), this protein is Small ribosomal subunit protein uS12.